Reading from the N-terminus, the 503-residue chain is Arabinose import ATP-binding protein AraG 1 (503 aa).

ABC transporter domains are found at residues 5–240 and 251–497; these read LRFD…MVGR and RALG…LPQT. ATP is bound at residue 37–44; that stretch reads GENGAGKS.

It belongs to the ABC transporter superfamily. Arabinose importer (TC 3.A.1.2.2) family. In terms of assembly, the complex is composed of two ATP-binding proteins (AraG), two transmembrane proteins (AraH) and a solute-binding protein (AraF).

The protein resides in the cell inner membrane. The catalysed reaction is L-arabinose(out) + ATP + H2O = L-arabinose(in) + ADP + phosphate + H(+). Part of the ABC transporter complex AraFGH involved in arabinose import. Responsible for energy coupling to the transport system. The sequence is that of Arabinose import ATP-binding protein AraG 1 from Burkholderia lata (strain ATCC 17760 / DSM 23089 / LMG 22485 / NCIMB 9086 / R18194 / 383).